A 417-amino-acid chain; its full sequence is Glucose-1-phosphatase (417 aa).

Positions 1–23 (MKYKVLTLCLSAALFAPIAPTMA) are cleaved as a signal peptide. A substrate-binding site is contributed by Arg-41. Residue His-42 is the Nucleophile of the active site. Substrate contacts are provided by Arg-45, Arg-118, and Glu-220. The active-site Proton donor is Asp-315.

Belongs to the histidine acid phosphatase family. Homodimer.

Its subcellular location is the periplasm. The catalysed reaction is alpha-D-glucose 1-phosphate + H2O = D-glucose + phosphate. The polypeptide is Glucose-1-phosphatase (agp) (Providencia rettgeri).